The primary structure comprises 455 residues: Glutamyl-tRNA reductase (455 aa).

Substrate is bound by residues 49–52, serine 109, 114–116, and glutamine 120; these read TCNR and EAQ. Residue cysteine 50 is the Nucleophile of the active site. 190–195 provides a ligand contact to NADP(+); it reads GAGAMG.

The protein belongs to the glutamyl-tRNA reductase family. In terms of assembly, homodimer.

It catalyses the reaction (S)-4-amino-5-oxopentanoate + tRNA(Glu) + NADP(+) = L-glutamyl-tRNA(Glu) + NADPH + H(+). It participates in porphyrin-containing compound metabolism; protoporphyrin-IX biosynthesis; 5-aminolevulinate from L-glutamyl-tRNA(Glu): step 1/2. Its function is as follows. Catalyzes the NADPH-dependent reduction of glutamyl-tRNA(Glu) to glutamate 1-semialdehyde (GSA). The protein is Glutamyl-tRNA reductase of Salinispora tropica (strain ATCC BAA-916 / DSM 44818 / JCM 13857 / NBRC 105044 / CNB-440).